A 238-amino-acid chain; its full sequence is Small ribosomal subunit protein uS2 (238 aa).

Belongs to the universal ribosomal protein uS2 family.

This is Small ribosomal subunit protein uS2 from Chloroflexus aggregans (strain MD-66 / DSM 9485).